Consider the following 416-residue polypeptide: Choline/ethanolaminephosphotransferase 1 (416 aa).

Residues M1–V20 form a disordered region. S18 carries the phosphoserine modification. A Phosphothreonine modification is found at T40. N86 is a CDP-choline binding site. 2 consecutive transmembrane segments (helical) span residues T89–P108 and L116–D133. D133 contributes to the Mg(2+) binding site. N144 carries an N-linked (GlcNAc...) asparagine glycan. E151 serves as a coordination point for CDP-choline. D154 provides a ligand contact to Mg(2+). H155 acts as the Proton acceptor in catalysis. 8 consecutive transmembrane segments (helical) span residues G156 to G176, D180 to Q199, I210 to G230, M246 to R267, V286 to K306, H315 to L334, T349 to F363, and D368 to C388. D158 contacts Mg(2+).

The protein belongs to the CDP-alcohol phosphatidyltransferase class-I family. In terms of assembly, homodimer. The cofactor is Mg(2+). Requires Mn(2+) as cofactor. In terms of tissue distribution, ubiquitously expressed.

The protein resides in the endoplasmic reticulum membrane. It localises to the nucleus membrane. It carries out the reaction CDP-ethanolamine + a 1,2-diacyl-sn-glycerol = a 1,2-diacyl-sn-glycero-3-phosphoethanolamine + CMP + H(+). The catalysed reaction is CDP-choline + a 1,2-diacyl-sn-glycerol = a 1,2-diacyl-sn-glycero-3-phosphocholine + CMP + H(+). It catalyses the reaction 1-O-alkyl-2-acyl-sn-glycerol + CDP-choline = a 1-O-alkyl-2-acyl-sn-glycero-3-phosphocholine + CMP + H(+). The enzyme catalyses a 1-O-(1Z-alkenyl)-2-acyl-sn-glycerol + CDP-choline = a 1-O-(1Z-alkenyl)-2-acyl-sn-glycero-3-phosphocholine + CMP + H(+). It carries out the reaction 1,2-dioctanoyl-sn-glycerol + CDP-choline = 1,2-dioctanoyl-sn-glycero-3-phosphocholine + CMP + H(+). The catalysed reaction is 1,2-didecanoyl-sn-glycerol + CDP-choline = 1,2-didecanoyl-sn-glycero-3-phosphocholine + CMP + H(+). It catalyses the reaction CDP-choline + 1,2-di-(9Z-octadecenoyl)-sn-glycerol = 1,2-di-(9Z-octadecenoyl)-sn-glycero-3-phosphocholine + CMP + H(+). The enzyme catalyses 1-hexadecanoyl-2-(9Z-octadecenoyl)-sn-glycerol + CDP-choline = 1-hexadecanoyl-2-(9Z-octadecenoyl)-sn-glycero-3-phosphocholine + CMP + H(+). It carries out the reaction CDP-ethanolamine + 1,2-di-(9Z-octadecenoyl)-sn-glycerol = 1,2-di-(9Z-octadecenoyl)-sn-glycero-3-phosphoethanolamine + CMP + H(+). The catalysed reaction is 1-hexadecanoyl-2-(9Z-octadecenoyl)-sn-glycerol + CDP-ethanolamine = 1-hexadecanoyl-2-(9Z-octadecenoyl)-sn-glycero-3-phosphoethanolamine + CMP + H(+). It catalyses the reaction 1-hexadecanoyl-2-(4Z,7Z,10Z,13Z,16Z,19Z-docosahexaenoyl)-sn-glycerol + CDP-choline = 1-hexadecanoyl-2-(4Z,7Z,10Z,13Z,16Z,19Z-docosahexaenoyl)-sn-glycero-3-phosphocholine + CMP + H(+). The enzyme catalyses 1,2-di-(9Z-hexadecenoyl)-sn-glycerol + CDP-choline = 1,2-di-(9Z-hexadecenoyl)-sn-glycero-3-phosphocholine + CMP + H(+). It carries out the reaction 1,2-di-(9Z-hexadecenoyl)-sn-glycerol + CDP-ethanolamine = 1,2-di-(9Z-hexadecenoyl)-sn-glycero-3-phosphoethanolamine + CMP + H(+). The catalysed reaction is 1-O-hexadecyl-2-acetyl-sn-glycerol + CDP-choline = 1-O-hexadecyl-2-acetyl-sn-glycero-3-phosphocholine + CMP + H(+). It catalyses the reaction 1-O-hexadecyl-2-(5Z,8Z,11Z,14Z-eicosatetraenoyl)-sn-glycerol + CDP-choline = 1-O-hexadecyl-2-(5Z,8Z,11Z,14Z)-eicosatetraenoyl-sn-glycero-3-phosphocholine + CMP + H(+). It participates in phospholipid metabolism; phosphatidylethanolamine biosynthesis; phosphatidylethanolamine from ethanolamine: step 3/3. The protein operates within phospholipid metabolism; phosphatidylcholine biosynthesis; phosphatidylcholine from phosphocholine: step 2/2. In terms of biological role, catalyzes both phosphatidylcholine and phosphatidylethanolamine biosynthesis from CDP-choline and CDP-ethanolamine, respectively. Involved in protein-dependent process of phospholipid transport to distribute phosphatidyl choline to the lumenal surface. Has a higher cholinephosphotransferase activity than ethanolaminephosphotransferase activity. In Homo sapiens (Human), this protein is Choline/ethanolaminephosphotransferase 1.